Consider the following 470-residue polypeptide: Cysteine--tRNA ligase (470 aa).

Residue cysteine 28 coordinates Zn(2+). The 'HIGH' region signature appears at proline 30–asparagine 40. Zn(2+) contacts are provided by cysteine 212, histidine 237, and glutamate 241. Residues lysine 271–serine 275 carry the 'KMSKS' region motif. Residue lysine 274 participates in ATP binding.

Belongs to the class-I aminoacyl-tRNA synthetase family. In terms of assembly, monomer. It depends on Zn(2+) as a cofactor.

Its subcellular location is the cytoplasm. The enzyme catalyses tRNA(Cys) + L-cysteine + ATP = L-cysteinyl-tRNA(Cys) + AMP + diphosphate. The chain is Cysteine--tRNA ligase from Levilactobacillus brevis (strain ATCC 367 / BCRC 12310 / CIP 105137 / JCM 1170 / LMG 11437 / NCIMB 947 / NCTC 947) (Lactobacillus brevis).